Reading from the N-terminus, the 550-residue chain is Pectinesterase 2.2 (550 aa).

A glycan (N-linked (GlcNAc...) asparagine) is linked at Asn-179. Residues Thr-312 and Gln-342 each contribute to the substrate site. Cysteines 331 and 358 form a disulfide. Catalysis depends on Asp-365, which acts as the Proton donor. The active-site Nucleophile is Asp-386. Cys-399 and Cys-433 are oxidised to a cystine. 2 residues coordinate substrate: Arg-454 and Trp-456.

This sequence in the N-terminal section; belongs to the PMEI family. It in the C-terminal section; belongs to the pectinesterase family.

It localises to the secreted. The protein resides in the cell wall. The catalysed reaction is [(1-&gt;4)-alpha-D-galacturonosyl methyl ester](n) + n H2O = [(1-&gt;4)-alpha-D-galacturonosyl](n) + n methanol + n H(+). It participates in glycan metabolism; pectin degradation; 2-dehydro-3-deoxy-D-gluconate from pectin: step 1/5. Its function is as follows. Pectinesterase may play a role in cell wall metabolism during fruit growth and development prior to ripening and may be required for preparing cell walls for softening by polygalacturonase during fruit ripening. In Solanum lycopersicum (Tomato), this protein is Pectinesterase 2.2 (PME2.2).